Consider the following 159-residue polypeptide: Single-stranded DNA-binding protein 2 (159 aa).

Residues 2 to 104 form the SSB domain; it reads MNRVVLVGRL…VVAESVQFLE (103 aa). Residues 106–159 are disordered; it reads RNHAEGATSNNYQNEANYSNNNKTSSYRADTSQKSDSFANEGKPIDINPDDLPF. Over residues 114–127 the composition is skewed to low complexity; that stretch reads SNNYQNEANYSNNN. Residues 128–143 show a composition bias toward polar residues; the sequence is KTSSYRADTSQKSDSF.

As to quaternary structure, homotetramer.

In Listeria innocua serovar 6a (strain ATCC BAA-680 / CLIP 11262), this protein is Single-stranded DNA-binding protein 2 (ssb2).